The following is a 202-amino-acid chain: MSSTECYGAPPHNYYQDWPTTHSYYPSVPSSYSPLNHHPADIWAAHPSNYIMGNGHVSPPATASGLSPPASRSSNSSAELPTGVTASQHNTYKWMHTKRSQRPAAPKKKVIDENGTNRTNFTTHQLTELEKEFHTAKYVNRTRRTEIASNLKLQEAQVKIWFQNRRMKEKKREKEKAFLARNTWESNSPTSSCSGEDVKNFK.

Disordered regions lie at residues 60–83 and 166–202; these read PATASGLSPPASRSSNSSAELPTG and RMKEKKREKEKAFLARNTWESNSPTSSCSGEDVKNFK. The segment covering 63 to 81 has biased composition (low complexity); the sequence is ASGLSPPASRSSNSSAELP. The segment at residues 114–173 is a DNA-binding region (homeobox); it reads NGTNRTNFTTHQLTELEKEFHTAKYVNRTRRTEIASNLKLQEAQVKIWFQNRRMKEKKRE. Residues 183–194 show a composition bias toward polar residues; it reads TWESNSPTSSCS.

Its subcellular location is the nucleus. The sequence is that of Homeobox protein ceh-13 (ceh-13) from Caenorhabditis elegans.